The sequence spans 853 residues: DNA mismatch repair protein MutS (853 aa).

Gly614–Ser621 contributes to the ATP binding site.

It belongs to the DNA mismatch repair MutS family.

In terms of biological role, this protein is involved in the repair of mismatches in DNA. It is possible that it carries out the mismatch recognition step. This protein has a weak ATPase activity. The chain is DNA mismatch repair protein MutS from Citrobacter koseri (strain ATCC BAA-895 / CDC 4225-83 / SGSC4696).